A 229-amino-acid polypeptide reads, in one-letter code: UPF0758 protein Moth_0536 (229 aa).

An MPN domain is found at 107–229; sequence VIRNPRDVAG…FTSLKERNLL (123 aa). Zn(2+)-binding residues include H178, H180, and D191. Residues 178–191 carry the JAMM motif motif; the sequence is HNHPSGDPTPSQED.

This sequence belongs to the UPF0758 family.

The sequence is that of UPF0758 protein Moth_0536 from Moorella thermoacetica (strain ATCC 39073 / JCM 9320).